The primary structure comprises 1037 residues: Sodium/potassium exporting P-type ATPase cta3 (1037 aa).

The Cytoplasmic portion of the chain corresponds to 1 to 61 (MVTINISNPV…GVSAWKVLLR (61 aa)). A helical membrane pass occupies residues 62-82 (QVLNAMCVVLILAAALSFGTT). Residue Asp-83 is a topological domain, extracellular. The helical transmembrane segment at 84-104 (WIEGGVISAIIVLNITVGFIQ) threads the bilayer. The Cytoplasmic portion of the chain corresponds to 105 to 281 (EYKAEKTMDS…LNVGTPLQRK (177 aa)). The helical transmembrane segment at 282-302 (LTVLAYILFCIAIILAIIVMA) threads the bilayer. The Extracellular portion of the chain corresponds to 303–313 (AHSFHVTNEVS). A helical transmembrane segment spans residues 314-334 (IYAISLGISIIPESLIAVLSI). Residues 335–760 (TMAMGQKNMS…GRRMFDNIMR (426 aa)) are Cytoplasmic-facing. Asp-368 acts as the 4-aspartylphosphate intermediate in catalysis. Mg(2+)-binding residues include Asp-368 and Thr-370. The ATP site is built by Thr-370, Glu-468, Lys-520, Arg-559, Thr-620, Gly-621, Asp-622, Arg-678, and Lys-684. Asp-703 contributes to the Mg(2+) binding site. An ATP-binding site is contributed by Asn-706. The chain crosses the membrane as a helical span at residues 761-781 (FVLHLLVSNVGEVILLVVGLA). Topologically, residues 782-787 (FRDEVH) are extracellular. Residues 788–808 (LSVFPMSPVEILWCNMITSSF) form a helical membrane-spanning segment. The Cytoplasmic segment spans residues 809-844 (PSMGLGMELAQPDVMERLPHDNKVGIFQKSLIVDMM). Residues 845 to 865 (VYGFFLGVVSLMTWVVIMYGF) traverse the membrane as a helical segment. Residues 866–889 (GTGNLSYDCNAHYHAGCNDVFKAR) are Extracellular-facing. The N-linked (GlcNAc...) asparagine glycan is linked to Asn-869. The chain crosses the membrane as a helical span at residues 890–910 (SAVFAVVTFCILIMAVEVKNF). Topologically, residues 911–939 (DNSLFNLHGIPWGEWNFRYFLHTLVENKF) are cytoplasmic. Residues 940–960 (LAWAIALAAVSVFPTIYIPVI) form a helical membrane-spanning segment. The Extracellular segment spans residues 961–969 (NRDVFKHTY). The helical transmembrane segment at 970–990 (IGWEWGVVAVAVMFYFFYVEI) threads the bilayer. At 991 to 1037 (WKSIRRSLTNPQKKGKFRRTLSNTITTESKLSEKDLEHRLFLQSRRA) the chain is on the cytoplasmic side. Ser-1012 is subject to Phosphoserine.

Belongs to the cation transport ATPase (P-type) (TC 3.A.3) family. Type IID subfamily. Mg(2+) is required as a cofactor. Post-translationally, the active site is phosphorylated in presence of sodium or potassium and in conditions of higher pH. Not phosphorylated in presence of calcium ions.

Its subcellular location is the cell membrane. It carries out the reaction Na(+)(in) + ATP + H2O = Na(+)(out) + ADP + phosphate + H(+). It catalyses the reaction K(+)(in) + ATP + H2O = K(+)(out) + ADP + phosphate + H(+). Its function is as follows. Catalyzes the hydrolysis of ATP coupled with the export of sodium and potassium from the cell. May export sodium less efficiently. May transport other cations such as lithium. Sodium/potassium efflux ATPases are involved in salt tolerance and maintaining the membrane potential across the plasma membrane in high salinity (Na+) or alkaline (K+) environments. This is Sodium/potassium exporting P-type ATPase cta3 from Schizosaccharomyces pombe (strain 972 / ATCC 24843) (Fission yeast).